The primary structure comprises 229 residues: Leucyl/phenylalanyl-tRNA--protein transferase (229 aa).

This sequence belongs to the L/F-transferase family.

The protein localises to the cytoplasm. It carries out the reaction N-terminal L-lysyl-[protein] + L-leucyl-tRNA(Leu) = N-terminal L-leucyl-L-lysyl-[protein] + tRNA(Leu) + H(+). The enzyme catalyses N-terminal L-arginyl-[protein] + L-leucyl-tRNA(Leu) = N-terminal L-leucyl-L-arginyl-[protein] + tRNA(Leu) + H(+). It catalyses the reaction L-phenylalanyl-tRNA(Phe) + an N-terminal L-alpha-aminoacyl-[protein] = an N-terminal L-phenylalanyl-L-alpha-aminoacyl-[protein] + tRNA(Phe). Functions in the N-end rule pathway of protein degradation where it conjugates Leu, Phe and, less efficiently, Met from aminoacyl-tRNAs to the N-termini of proteins containing an N-terminal arginine or lysine. This is Leucyl/phenylalanyl-tRNA--protein transferase from Desulforapulum autotrophicum (strain ATCC 43914 / DSM 3382 / VKM B-1955 / HRM2) (Desulfobacterium autotrophicum).